A 205-amino-acid polypeptide reads, in one-letter code: Ribonuclease HII (205 aa).

An RNase H type-2 domain is found at 1-205 (MLVCGVDEAG…RPARLIEAGG (205 aa)). Residues Asp7, Glu8, and Asp105 each coordinate a divalent metal cation.

The protein belongs to the RNase HII family. Mn(2+) is required as a cofactor. Requires Mg(2+) as cofactor.

It is found in the cytoplasm. The enzyme catalyses Endonucleolytic cleavage to 5'-phosphomonoester.. In terms of biological role, endonuclease that specifically degrades the RNA of RNA-DNA hybrids. In Cenarchaeum symbiosum (strain A), this protein is Ribonuclease HII.